Reading from the N-terminus, the 231-residue chain is MSILVVTGTSTDVGKTVVTAALAAAAREAGLSVAVCKPAQTGVAPGGPGDLAEVTRLSGVTAVVELARYPEPLAPDTAARRSGLPMLRCADVVETVRALDDGHDLVLVEGAGGLLVRLGAEGFTLVDLARALDAPAVVVAAAGLGTLNHTELTIRALSAAGLACAGTVIGSWPDEPGLAERCNLDDLPAVTGVDVVGSVPAGSGRLASASFGAAASTWFDSTWLKSTLTRL.

12–17 (DVGKTV) contributes to the ATP binding site. Position 16 (threonine 16) interacts with Mg(2+). The active site involves lysine 37. Threonine 41 contacts substrate. ATP-binding positions include aspartate 50, 109–112 (EGAG), 170–171 (GS), and 200–202 (PAG). Mg(2+) is bound by residues aspartate 50 and glutamate 109.

Belongs to the dethiobiotin synthetase family. In terms of assembly, homodimer. Mg(2+) is required as a cofactor.

Its subcellular location is the cytoplasm. It carries out the reaction (7R,8S)-7,8-diammoniononanoate + CO2 + ATP = (4R,5S)-dethiobiotin + ADP + phosphate + 3 H(+). It functions in the pathway cofactor biosynthesis; biotin biosynthesis; biotin from 7,8-diaminononanoate: step 1/2. Its function is as follows. Catalyzes a mechanistically unusual reaction, the ATP-dependent insertion of CO2 between the N7 and N8 nitrogen atoms of 7,8-diaminopelargonic acid (DAPA, also called 7,8-diammoniononanoate) to form a ureido ring. The polypeptide is ATP-dependent dethiobiotin synthetase BioD (Rhodococcus jostii (strain RHA1)).